The primary structure comprises 23 residues: Superoxide dismutase [Mn], mitochondrial (23 aa).

It belongs to the iron/manganese superoxide dismutase family. Homotetramer. The cofactor is Mn(2+).

Its subcellular location is the mitochondrion matrix. The catalysed reaction is 2 superoxide + 2 H(+) = H2O2 + O2. Its function is as follows. Destroys superoxide anion radicals which are normally produced within the cells and which are toxic to biological systems. This Aquarana catesbeiana (American bullfrog) protein is Superoxide dismutase [Mn], mitochondrial.